A 375-amino-acid chain; its full sequence is Paralyzed arrest at two-fold protein 6 (375 aa).

Residues 1 to 51 (MSTLGRSKTPSRDEPKKPGVFEKLSGTLSRKKKAPEDEHGNQGGAHHATDE) are disordered. The span at 10–20 (PSRDEPKKPGV) shows a compositional bias: basic and acidic residues. Calponin-homology (CH) domains are found at residues 99-206 (AQVV…LHYR) and 266-373 (AHVK…TKYK).

This sequence belongs to the parvin family. May interact (via calponin-homology (CH) 2 domain) with pat-4 (via kinase domain). May form a complex with unc-112 and pat-4. Component of an integrin containing attachment complex, composed of at least pat-2, pat-3, pat-4, pat-6, unc-52, unc-97 and unc-112. Expressed from 1.5 stage embryos, mostly within the muscle cells. In adult hermaphrodites, expressed in the attachments of other muscles, including the uterine, anal depressor, anal sphincter, and vulval muscles, as well as in the spermatheca and the distal tip cells. Expressed in mechanosensory receptor neurons ALML/R, PLML/R, AVM, and PVM. Localizes at body wall muscle attachments.

It is found in the cytoplasm. Its subcellular location is the cytoskeleton. It localises to the myofibril. The protein resides in the sarcomere. The protein localises to the m line. It is found in the perikaryon. Its subcellular location is the cell projection. It localises to the axon. Involved in the regulation of cell adhesion and cytoskeleton organization. Component of an integrin containing attachment complex, which is required for muscle development and maintenance. During embryonic development, required to recruit cpna-1, unc-89 and myofilaments to newly forming integrin attachments composed of integrins pat-2/pat-3, pat-4 and unc-112. Also required to reposition the integrin-based attachments so that they form the highly ordered array of dense body and M-line attachments that are characteristic of mature muscle cells. During the formation of neuromuscular junctions at the larval stage, negatively regulates membrane protrusion from body wall muscles. The protein is Paralyzed arrest at two-fold protein 6 of Caenorhabditis elegans.